We begin with the raw amino-acid sequence, 448 residues long: Probable glycine dehydrogenase (decarboxylating) subunit 1 (448 aa).

It belongs to the GcvP family. N-terminal subunit subfamily. The glycine cleavage system is composed of four proteins: P, T, L and H. In this organism, the P 'protein' is a heterodimer of two subunits.

It catalyses the reaction N(6)-[(R)-lipoyl]-L-lysyl-[glycine-cleavage complex H protein] + glycine + H(+) = N(6)-[(R)-S(8)-aminomethyldihydrolipoyl]-L-lysyl-[glycine-cleavage complex H protein] + CO2. The glycine cleavage system catalyzes the degradation of glycine. The P protein binds the alpha-amino group of glycine through its pyridoxal phosphate cofactor; CO(2) is released and the remaining methylamine moiety is then transferred to the lipoamide cofactor of the H protein. This Listeria innocua serovar 6a (strain ATCC BAA-680 / CLIP 11262) protein is Probable glycine dehydrogenase (decarboxylating) subunit 1.